The chain runs to 185 residues: V-type proton ATPase subunit E (185 aa).

The protein belongs to the V-ATPase E subunit family.

Functionally, produces ATP from ADP in the presence of a proton gradient across the membrane. The sequence is that of V-type proton ATPase subunit E from Deinococcus deserti (strain DSM 17065 / CIP 109153 / LMG 22923 / VCD115).